We begin with the raw amino-acid sequence, 405 residues long: Alpha-N-acetylgalactosaminidase (405 aa).

3 disulfide bridges follow: Cys-21–Cys-63, Cys-25–Cys-32, and Cys-111–Cys-142. Residues 61–62 (DD) and Lys-138 each bind substrate. The Nucleophile role is filled by Asp-140. A glycan (N-linked (GlcNAc...) asparagine) is linked at Asn-161. Cys-171 and Cys-193 form a disulfide bridge. Substrate is bound at residue Ser-172. Asn-185 is a glycosylation site (N-linked (GlcNAc...) asparagine). Arg-197 and Asp-201 together coordinate substrate. Catalysis depends on Asp-201, which acts as the Proton donor. Asn-369 is a glycosylation site (N-linked (GlcNAc...) asparagine).

Belongs to the glycosyl hydrolase 27 family. As to quaternary structure, homodimer.

The protein localises to the lysosome. The catalysed reaction is Cleavage of non-reducing alpha-(1-&gt;3)-N-acetylgalactosamine residues from human blood group A and AB mucin glycoproteins, Forssman hapten and blood group A lacto series glycolipids.. The enzyme catalyses a neolactoside IV(3)-alpha-GalNAc,IV(2)-alpha-Fuc-nLc4Cer(d18:1(4E)) + H2O = a neolactoside IV(2)-alpha-Fuc-nLc4Cer(d18:1(4E)) + N-acetyl-alpha-D-galactosamine. It catalyses the reaction a neolactoside IV(3)-alpha-GalNAc,IV(2)-alpha-Fuc-nLc4Cer(d18:0) + H2O = a neolactoside IV(2)-alpha-Fuc-nLc4Cer(d18:0) + N-acetyl-alpha-D-galactosamine. It carries out the reaction a globoside IV3GalNAc-Gb4Cer + H2O = N-acetyl-alpha-D-galactosamine + a globoside Gb4Cer. Removes terminal alpha-N-acetylgalactosamine residues from glycolipids and glycopeptides. Required for the breakdown of glycolipids. The sequence is that of Alpha-N-acetylgalactosaminidase (NAGA) from Gallus gallus (Chicken).